A 65-amino-acid polypeptide reads, in one-letter code: Ubiquinol-cytochrome-c reductase complex assembly factor 6 (65 aa).

Topologically, residues 1 to 9 (MPAGVSWPR) are mitochondrial matrix. The helical; Signal-anchor for type II membrane protein transmembrane segment at 10–32 (YLRMFAASVLSMFAGAQVVHHYY) threads the bilayer. At 33–65 (RPDLSIPEIPPKPGELRTELLGLKERQMDSQKQ) the chain is on the mitochondrial intermembrane side.

The protein belongs to the UQCC6 family. Highly expressed in skeletal and cardiac muscle (at protein level).

The protein localises to the mitochondrion inner membrane. Its function is as follows. Required for the assembly and stability of the mitochondrial ubiquinol-cytochrome c reductase complex (complex III (CIII) or cytochrome b-c1 complex), a multisubunit transmembrane complex that is part of the mitochondrial electron transport chain (ETC) which drives oxidative phosphorylation. Mediates early complex III biogenesis. Participates in regulating the levels of electron transport chain proteins, and therefore energy supply, in response to changes in energy demand. Also required for cytochrome c oxidase complex (complex IV) assembly. The sequence is that of Ubiquinol-cytochrome-c reductase complex assembly factor 6 (uqcc6) from Danio rerio (Zebrafish).